A 201-amino-acid polypeptide reads, in one-letter code: 3-isopropylmalate dehydratase small subunit (201 aa).

This sequence belongs to the LeuD family. LeuD type 1 subfamily. Heterodimer of LeuC and LeuD.

The catalysed reaction is (2R,3S)-3-isopropylmalate = (2S)-2-isopropylmalate. It functions in the pathway amino-acid biosynthesis; L-leucine biosynthesis; L-leucine from 3-methyl-2-oxobutanoate: step 2/4. Functionally, catalyzes the isomerization between 2-isopropylmalate and 3-isopropylmalate, via the formation of 2-isopropylmaleate. The sequence is that of 3-isopropylmalate dehydratase small subunit from Shewanella sp. (strain ANA-3).